Reading from the N-terminus, the 107-residue chain is U20-lycotoxin-Ls1b (107 aa).

The first 30 residues, 1–30 (MFSTSDQVSKMNSRILSALLILGIATCVIA), serve as a signal peptide directing secretion. The WAP domain occupies 31-76 (GGFCPKSRHPQCNLSYKINDCCAQSDCRVGSVCCVEGCGNVCRAES). 5 disulfide bridges follow: C34–C64, C42–C68, C51–C63, C52–C90, and C57–C72.

This sequence belongs to the venom protein 11 family. 02 (wap-2) subfamily. In terms of processing, contains 5 disulfide bonds. Expressed by the venom gland.

Its subcellular location is the secreted. Has antibacterial activity. The protein is U20-lycotoxin-Ls1b of Lycosa singoriensis (Wolf spider).